Consider the following 955-residue polypeptide: Leucine--tRNA ligase (955 aa).

A 'HIGH' region motif is present at residues 66 to 77; sequence PYPSGSGLHVGH. The 'KMSKS' region signature appears at 725–729; it reads KMGKS. Lysine 728 lines the ATP pocket.

The protein belongs to the class-I aminoacyl-tRNA synthetase family.

It localises to the cytoplasm. The catalysed reaction is tRNA(Leu) + L-leucine + ATP = L-leucyl-tRNA(Leu) + AMP + diphosphate. This chain is Leucine--tRNA ligase, found in Saccharopolyspora erythraea (strain ATCC 11635 / DSM 40517 / JCM 4748 / NBRC 13426 / NCIMB 8594 / NRRL 2338).